We begin with the raw amino-acid sequence, 313 residues long: 4-diphosphocytidyl-2-C-methyl-D-erythritol kinase (313 aa).

K29 is a catalytic residue. 113-123 (PMGGGVGGGSS) is a binding site for ATP. D155 is a catalytic residue.

It belongs to the GHMP kinase family. IspE subfamily.

The catalysed reaction is 4-CDP-2-C-methyl-D-erythritol + ATP = 4-CDP-2-C-methyl-D-erythritol 2-phosphate + ADP + H(+). The protein operates within isoprenoid biosynthesis; isopentenyl diphosphate biosynthesis via DXP pathway; isopentenyl diphosphate from 1-deoxy-D-xylulose 5-phosphate: step 3/6. Its function is as follows. Catalyzes the phosphorylation of the position 2 hydroxy group of 4-diphosphocytidyl-2C-methyl-D-erythritol. In Haemophilus influenzae (strain 86-028NP), this protein is 4-diphosphocytidyl-2-C-methyl-D-erythritol kinase.